The chain runs to 277 residues: Ubiquinone biosynthesis protein COQ4, mitochondrial (277 aa).

The transit peptide at 1–14 (MLTKRALRTTDPYR) directs the protein to the mitochondrion. 4 residues coordinate Zn(2+): H157, D158, H161, and E173.

This sequence belongs to the COQ4 family. In terms of assembly, component of a multi-subunit COQ enzyme complex, composed of at least COQ3, COQ4, COQ5, COQ6, COQ7 and COQ9. Requires Zn(2+) as cofactor.

The protein resides in the mitochondrion inner membrane. It carries out the reaction a 4-hydroxy-3-methoxy-5-(all-trans-polyprenyl)benzoate + H(+) = a 2-methoxy-6-(all-trans-polyprenyl)phenol + CO2. It functions in the pathway cofactor biosynthesis; ubiquinone biosynthesis. In terms of biological role, lyase that catalyzes the C1-decarboxylation of 4-hydroxy-3-methoxy-5-(all-trans-polyprenyl)benzoic acid into 2-methoxy-6-(all-trans-polyprenyl)phenol during ubiquinone biosynthesis. The sequence is that of Ubiquinone biosynthesis protein COQ4, mitochondrial from Ajellomyces capsulatus (strain NAm1 / WU24) (Darling's disease fungus).